The sequence spans 205 residues: NADH-quinone oxidoreductase subunit J (205 aa).

The next 5 membrane-spanning stretches (helical) occupy residues 1–21 (MPIFFYLFATLITISSVCVVL), 26–46 (VYSVLWLIFAFINGAGLMILL), 54–74 (MLIVIYVGAVAVLFLFVIMML), 89–109 (LALSIFIALIMFADLVIIILL), and 142–162 (FMLPFQMAGLILFVAMIACIT).

It belongs to the complex I subunit 6 family.

The protein resides in the cell membrane. It carries out the reaction a quinone + NADH + 5 H(+)(in) = a quinol + NAD(+) + 4 H(+)(out). NDH-1 shuttles electrons from NADH, via FMN and iron-sulfur (Fe-S) centers, to quinones in the respiratory chain. Couples the redox reaction to proton translocation (for every two electrons transferred, four hydrogen ions are translocated across the cytoplasmic membrane), and thus conserves the redox energy in a proton gradient. The sequence is that of NADH-quinone oxidoreductase subunit J (nuoJ) from Rickettsia conorii (strain ATCC VR-613 / Malish 7).